We begin with the raw amino-acid sequence, 578 residues long: ATP-dependent RNA helicase has-1 (578 aa).

Residues Met1–Thr91 are disordered. Residues Asp13–Lys26 show a composition bias toward basic and acidic residues. The span at Lys27–Lys36 shows a compositional bias: basic residues. 2 stretches are compositionally biased toward acidic residues: residues Glu43–Asn54 and Glu77–Asp88. Residues Thr107–Arg135 carry the Q motif motif. Residues Ile138–Tyr313 form the Helicase ATP-binding domain. An ATP-binding site is contributed by Ala151–Thr158. The DEAD box motif lies at Asp260 to Asp263. A Bipartite nuclear localization signal motif is present at residues Lys339–Lys355. Residues Leu343 to Ile497 enclose the Helicase C-terminal domain. Positions Ser556 to His578 are disordered.

The protein belongs to the DEAD box helicase family. DDX18/HAS1 subfamily. Associates in the nucleolus with the 60S and pre-60S ribosomal subunits.

The protein localises to the nucleus. Its subcellular location is the nucleolus. It catalyses the reaction ATP + H2O = ADP + phosphate + H(+). Its function is as follows. ATP-dependent RNA helicase involved in 40S ribosomal subunit biogenesis. Required for the processing and cleavage of 35S pre-rRNA at sites A0, A1, and A2, leading to mature 18S rRNA. The protein is ATP-dependent RNA helicase has-1 (has-1) of Neurospora crassa (strain ATCC 24698 / 74-OR23-1A / CBS 708.71 / DSM 1257 / FGSC 987).